A 582-amino-acid polypeptide reads, in one-letter code: MSHDTKPNDTPAASNFLRSIIDQDLATGTYAGRADKQGDPLPTVITRFPPEPNGYLHIGHAKSICVNFGLARDYAGRCHLRFDDTNPVKEDTEYVDSIIDAVHWLGFSWDSAQAGSTPHLYFASDYFDQLYKFAETLIERGVAYVDSQSAEQIAAMRGNFSEPGKPSPFRDRSVEENLKLFREMRDGKYADGEHVLRAKIDMTAPNIVMRDPVLYRIRHAHHHRTGDKWCIYPMYDFTHCISDAIENITHSLCTLEFENNRPLYDWVLEHLRDAGVFANPLPHQYEFARLNLTYAITSKRRLKQLVDEQRVTGWDDPRMPTIVGIRRRGYTPESIQLFCDRVGVSKADSWIDMSTLEGAVRDDLDARAPRSVAVLDPLKLILDNYPEGQSEECSAPVHPKQPEMGRRVFPLSRELWIEREDFNENPPKGYFRLFPGNKVRLRYGYVIECTGVDKDADGNVIAVHANYLPETKSGTPGADSVKVKGNIHWVSAPHACEAEVRLYDRLFNDPNPDAGGKNFLDALNPESKKVVTAYLEPGLRDAKPEDRFQFERHGYFVADRVDSQPGKPVFNRTVGLKDSWGK.

Positions 50 to 60 (PEPNGYLHIGH) match the 'HIGH' region motif. Residues 51 to 53 (EPN) and 57 to 63 (HIGHAKS) each bind ATP. 2 residues coordinate L-glutamine: aspartate 83 and tyrosine 235. Residues threonine 254 and 289-290 (RL) each bind ATP. The short motif at 296–300 (ITSKR) is the 'KMSKS' region element.

The protein belongs to the class-I aminoacyl-tRNA synthetase family. Monomer.

The protein resides in the cytoplasm. It carries out the reaction tRNA(Gln) + L-glutamine + ATP = L-glutaminyl-tRNA(Gln) + AMP + diphosphate. In Cupriavidus metallidurans (strain ATCC 43123 / DSM 2839 / NBRC 102507 / CH34) (Ralstonia metallidurans), this protein is Glutamine--tRNA ligase.